Reading from the N-terminus, the 187-residue chain is NADH-quinone oxidoreductase subunit B (187 aa).

Positions 1–10 (MTADHNRALH) are enriched in basic and acidic residues. Positions 1–22 (MTADHNRALHDAPTARGGEVRQ) are disordered. [4Fe-4S] cluster contacts are provided by C66, C67, C131, and C161.

This sequence belongs to the complex I 20 kDa subunit family. In terms of assembly, NDH-1 is composed of 14 different subunits. Subunits NuoB, C, D, E, F, and G constitute the peripheral sector of the complex. [4Fe-4S] cluster serves as cofactor.

It localises to the cell inner membrane. The enzyme catalyses a quinone + NADH + 5 H(+)(in) = a quinol + NAD(+) + 4 H(+)(out). Functionally, NDH-1 shuttles electrons from NADH, via FMN and iron-sulfur (Fe-S) centers, to quinones in the respiratory chain. Couples the redox reaction to proton translocation (for every two electrons transferred, four hydrogen ions are translocated across the cytoplasmic membrane), and thus conserves the redox energy in a proton gradient. This Erythrobacter litoralis (strain HTCC2594) protein is NADH-quinone oxidoreductase subunit B.